The chain runs to 469 residues: Glutamate--tRNA ligase (469 aa).

The 'HIGH' region signature appears at 9–19; that stretch reads PSPTGFLHVGG. Cys-98, Cys-100, Cys-125, and Asp-127 together coordinate Zn(2+). Positions 236–240 match the 'KMSKS' region motif; sequence KLSKR. Position 239 (Lys-239) interacts with ATP.

The protein belongs to the class-I aminoacyl-tRNA synthetase family. Glutamate--tRNA ligase type 1 subfamily. In terms of assembly, monomer. Zn(2+) serves as cofactor.

It is found in the cytoplasm. The catalysed reaction is tRNA(Glu) + L-glutamate + ATP = L-glutamyl-tRNA(Glu) + AMP + diphosphate. Catalyzes the attachment of glutamate to tRNA(Glu) in a two-step reaction: glutamate is first activated by ATP to form Glu-AMP and then transferred to the acceptor end of tRNA(Glu). This chain is Glutamate--tRNA ligase, found in Shewanella sp. (strain MR-4).